Reading from the N-terminus, the 199-residue chain is Protein-methionine-sulfoxide reductase heme-binding subunit MsrQ (199 aa).

4 consecutive transmembrane segments (helical) span residues 10-30 (WLKVCLHLAGFLPLLWLFWAI), 82-102 (LWCFVWATLHLTSYALLELGI), 116-136 (PYLTLGIISWLVLLALTLTST), and 153-173 (VVYLVAILAPIHYLWSVKILS).

Belongs to the MsrQ family. In terms of assembly, heterodimer of a catalytic subunit (MsrP) and a heme-binding subunit (MsrQ). Requires FMN as cofactor. Heme b is required as a cofactor.

It is found in the cell inner membrane. Functionally, part of the MsrPQ system that repairs oxidized periplasmic proteins containing methionine sulfoxide residues (Met-O), using respiratory chain electrons. Thus protects these proteins from oxidative-stress damage caused by reactive species of oxygen and chlorine generated by the host defense mechanisms. MsrPQ is essential for the maintenance of envelope integrity under bleach stress, rescuing a wide series of structurally unrelated periplasmic proteins from methionine oxidation, including the primary periplasmic chaperone SurA and the lipoprotein Pal. MsrQ provides electrons for reduction to the reductase catalytic subunit MsrP, using the quinone pool of the respiratory chain. This Salmonella dublin (strain CT_02021853) protein is Protein-methionine-sulfoxide reductase heme-binding subunit MsrQ.